The primary structure comprises 294 residues: MTHIPVLLKEMLLQLSPHSGGIYVDATFGAGGYSKAILESADCKVYAVDRDETVTKFYDDLNVKYPNRIKLFIEKFSNIKNLLDSNNIKGINGIVFDVGVSSMQLDNGDRGFSFLRDGPLNMSMDNYSHMNASTFVNALREEEIANTIYNYGGERHSRRIARAIVNARKKKIIKTTFELADIVRSVVFRGKSKIDPATRTFQAIRIWVNDELGELEKGIKAASEILSENGKLIVVTFHSLEDRIVKTVFKDLCEPGSTKTFSLLNKKVIKASSEEINVNPRARSAKLRAIQRLS.

S-adenosyl-L-methionine contacts are provided by residues 31 to 33, aspartate 49, phenylalanine 76, aspartate 97, and glutamine 104; that span reads GGY.

Belongs to the methyltransferase superfamily. RsmH family.

The protein resides in the cytoplasm. It carries out the reaction cytidine(1402) in 16S rRNA + S-adenosyl-L-methionine = N(4)-methylcytidine(1402) in 16S rRNA + S-adenosyl-L-homocysteine + H(+). Its function is as follows. Specifically methylates the N4 position of cytidine in position 1402 (C1402) of 16S rRNA. In Wolbachia pipientis subsp. Culex pipiens (strain wPip), this protein is Ribosomal RNA small subunit methyltransferase H.